We begin with the raw amino-acid sequence, 147 residues long: Myoglobin (147 aa).

A Globin domain is found at 2-141 (ADFDMVLKCW…IITDMEADYK (140 aa)). A nitrite-binding site is contributed by histidine 60. O2 is bound at residue histidine 60. Histidine 89 is a binding site for heme b.

It belongs to the globin family. As to quaternary structure, monomeric.

The protein localises to the cytoplasm. Its subcellular location is the sarcoplasm. The catalysed reaction is Fe(III)-heme b-[protein] + nitric oxide + H2O = Fe(II)-heme b-[protein] + nitrite + 2 H(+). It catalyses the reaction H2O2 + AH2 = A + 2 H2O. In terms of biological role, monomeric heme protein which primary function is to store oxygen and facilitate its diffusion within muscle tissues. Reversibly binds oxygen through a pentacoordinated heme iron and enables its timely and efficient release as needed during periods of heightened demand. Depending on the oxidative conditions of tissues and cells, and in addition to its ability to bind oxygen, it also has a nitrite reductase activity whereby it regulates the production of bioactive nitric oxide. Under stress conditions, like hypoxia and anoxia, it also protects cells against reactive oxygen species thanks to its pseudoperoxidase activity. The protein is Myoglobin (mb) of Channichthys rhinoceratus (Unicorn icefish).